Reading from the N-terminus, the 303-residue chain is tRNA dimethylallyltransferase (303 aa).

12–19 (GTTASGKS) provides a ligand contact to ATP. 14–19 (TASGKS) provides a ligand contact to substrate. An interaction with substrate tRNA region spans residues 37 to 40 (DSRQ).

It belongs to the IPP transferase family. In terms of assembly, monomer. Mg(2+) serves as cofactor.

It catalyses the reaction adenosine(37) in tRNA + dimethylallyl diphosphate = N(6)-dimethylallyladenosine(37) in tRNA + diphosphate. Catalyzes the transfer of a dimethylallyl group onto the adenine at position 37 in tRNAs that read codons beginning with uridine, leading to the formation of N6-(dimethylallyl)adenosine (i(6)A). The chain is tRNA dimethylallyltransferase from Synechocystis sp. (strain ATCC 27184 / PCC 6803 / Kazusa).